A 105-amino-acid chain; its full sequence is UPF0235 protein A1E_05380 (105 aa).

This sequence belongs to the UPF0235 family.

This is UPF0235 protein A1E_05380 from Rickettsia canadensis (strain McKiel).